Here is a 205-residue protein sequence, read N- to C-terminus: Lymphotoxin-alpha (205 aa).

The first 34 residues, 1–34, serve as a signal peptide directing secretion; sequence MTPPERLFLSRVRGTPLHLLLLGLLLVLLPGAQG. O-linked (GalNAc...) threonine glycosylation is present at threonine 41. Residues 63–205 form the THD domain; sequence PAAHLIGDPS…STVFFGAFAL (143 aa). Asparagine 96 carries N-linked (GlcNAc...) asparagine glycosylation.

This sequence belongs to the tumor necrosis factor family. Homotrimer, and heterotrimer of either two LTB and one LTA subunits or (less prevalent) two LTA and one LTB subunits. Interacts with TNFRSF14.

The protein localises to the secreted. It is found in the membrane. In terms of biological role, cytokine that in its homotrimeric form binds to TNFRSF1A/TNFR1, TNFRSF1B/TNFBR and TNFRSF14/HVEM. In its heterotrimeric form with LTB binds to TNFRSF3/LTBR. Lymphotoxin is produced by lymphocytes and is cytotoxic for a wide range of tumor cells in vitro and in vivo. This chain is Lymphotoxin-alpha (LTA), found in Macaca mulatta (Rhesus macaque).